The primary structure comprises 279 residues: Thioredoxin-like 1-2, chloroplastic (279 aa).

A chloroplast-targeting transit peptide spans 1 to 34 (MAATAAQAVAVKGSVAVPPCGSRGRRRGAVASVR). Residues 61-203 (PRRSRPVPRN…FRDALAKHKP (143 aa)) enclose the Thioredoxin domain. Active-site nucleophile residues include Cys-126 and Cys-129. Cys-126 and Cys-129 are disulfide-bonded. Residues 242 to 279 (GDAAAAQELDRGSTKLSPPAKPLVKQGSEERSLVSSGR) form a disordered region.

It belongs to the thioredoxin family.

The protein localises to the plastid. The protein resides in the chloroplast. Probable thiol-disulfide oxidoreductase that may participate in various redox reactions. This Oryza sativa subsp. japonica (Rice) protein is Thioredoxin-like 1-2, chloroplastic.